The chain runs to 311 residues: Sulfate adenylyltransferase subunit 2 (311 aa).

Belongs to the PAPS reductase family. CysD subfamily. In terms of assembly, heterodimer composed of CysD, the smaller subunit, and CysN.

The catalysed reaction is sulfate + ATP + H(+) = adenosine 5'-phosphosulfate + diphosphate. The protein operates within sulfur metabolism; hydrogen sulfide biosynthesis; sulfite from sulfate: step 1/3. In terms of biological role, with CysN forms the ATP sulfurylase (ATPS) that catalyzes the adenylation of sulfate producing adenosine 5'-phosphosulfate (APS) and diphosphate, the first enzymatic step in sulfur assimilation pathway. APS synthesis involves the formation of a high-energy phosphoric-sulfuric acid anhydride bond driven by GTP hydrolysis by CysN coupled to ATP hydrolysis by CysD. The chain is Sulfate adenylyltransferase subunit 2 from Caulobacter vibrioides (strain ATCC 19089 / CIP 103742 / CB 15) (Caulobacter crescentus).